The primary structure comprises 404 residues: Cysteine desulfurase IscS (404 aa).

Residues 75–76 (AT), N155, Q183, and 203–205 (SAH) each bind pyridoxal 5'-phosphate. K206 is subject to N6-(pyridoxal phosphate)lysine. Residue T243 participates in pyridoxal 5'-phosphate binding. The active-site Cysteine persulfide intermediate is the C328. Position 328 (C328) interacts with [2Fe-2S] cluster.

This sequence belongs to the class-V pyridoxal-phosphate-dependent aminotransferase family. NifS/IscS subfamily. As to quaternary structure, homodimer. Forms a heterotetramer with IscU, interacts with other sulfur acceptors. Pyridoxal 5'-phosphate is required as a cofactor.

The protein resides in the cytoplasm. It catalyses the reaction (sulfur carrier)-H + L-cysteine = (sulfur carrier)-SH + L-alanine. It functions in the pathway cofactor biosynthesis; iron-sulfur cluster biosynthesis. Functionally, master enzyme that delivers sulfur to a number of partners involved in Fe-S cluster assembly, tRNA modification or cofactor biosynthesis. Catalyzes the removal of elemental sulfur atoms from cysteine to produce alanine. Functions as a sulfur delivery protein for Fe-S cluster synthesis onto IscU, an Fe-S scaffold assembly protein, as well as other S acceptor proteins. This Pseudomonas entomophila (strain L48) protein is Cysteine desulfurase IscS.